The following is a 38-amino-acid chain: A2-specific pheromone (38 aa).

C35 carries the cysteine methyl ester modification. A lipid anchor (S-farnesyl cysteine) is attached at C35. Positions 36–38 (LIA) are cleaved as a propeptide — removed in mature form.

Its subcellular location is the cell membrane. Mating pheromone for A2 allele. This Mycosarcoma maydis (Corn smut fungus) protein is A2-specific pheromone (MFA2).